The chain runs to 783 residues: Cadherin-5 (783 aa).

Residues 1-25 (MQALVMLLATGATYYLGLLAAAAAA) form the signal peptide. Positions 26 to 45 (VNPGRPNTPGSLPAHRRQKR) are excised as a propeptide. Cadherin domains follow at residues 44-149 (KRDW…WPVF), 150-256 (THRV…FPIF), 257-371 (TQNR…PPIF), 372-478 (QQPF…APEF), and 478-585 (FAKP…GEFT). Residues 46–599 (DWIWNQMHID…AAAQVGISIQ (554 aa)) lie on the Extracellular side of the membrane. 2 residues coordinate Ca(2+): Glu56 and Glu57. A glycan (N-linked (GlcNAc...) asparagine) is linked at Asn59. Ca(2+) contacts are provided by Asp107, Glu109, Asp141, Val142, Asn143, Asp144, and Asn145. Asn155 is a glycosylation site (N-linked (GlcNAc...) asparagine). Residues Asp175, Asp177, His184, and Asp229 each contribute to the Ca(2+) site. Residues Asn361, Asn441, and Asn523 are each glycosylated (N-linked (GlcNAc...) asparagine). Residues 600–620 (ALVAIFLCILTFTVITLLIIL) form a helical membrane-spanning segment. The tract at residues 621–660 (RRRLRKQARAHGKSVPEIHEQLVTYDEEGGGEMDTTSYDV) is required for interaction with PALS1. Over 621 to 783 (RRRLRKQARA…GSDPQEELVY (163 aa)) the chain is Cytoplasmic.

In terms of assembly, part of a complex composed of AMOTL2, MAGI1 and CDH5, within the complex AMOTL2 acts as a scaffold protein for the interaction of MAGI1 with CDH5. The complex is required for coupling actin fibers to cell junctions in endothelial cells. Within the complex AMOTL2 (via its N-terminus) interacts with CDH5. Interacts (via cadherin 5 domain) with PTPRB. Interacts with TRPC4. Interacts with KRIT1. Interacts with PARD3. Interacts with RTN4 (isoform B). Interacts with PALS1; the interaction promotes PALS1 localization to cell junctions and is required for CDH5-mediated vascular lumen formation and endothelial cell. Interacts with CTNND1/p120-catenin; the interaction controls CADH5 endocytosis. Phosphorylated on tyrosine residues by KDR/VEGFR-2. Dephosphorylated by PTPRB. In terms of processing, O-glycosylated.

The protein resides in the cell junction. The protein localises to the adherens junction. Its subcellular location is the cell membrane. It localises to the cytoplasm. Its function is as follows. Cadherins are calcium-dependent cell adhesion proteins. They preferentially interact with themselves in a homophilic manner in connecting cells; cadherins may thus contribute to the sorting of heterogeneous cell types. This cadherin may play a important role in endothelial cell biology through control of the cohesion and organization of the intercellular junctions. It associates with alpha-catenin forming a link to the cytoskeleton. Plays a role in coupling actin fibers to cell junctions in endothelial cells, via acting as a cell junctional complex anchor for AMOTL2 and MAGI1. Acts in concert with KRIT1 and PALS1 to establish and maintain correct endothelial cell polarity and vascular lumen. These effects are mediated by recruitment and activation of the Par polarity complex and RAP1B. Required for activation of PRKCZ and for localization of phosphorylated PRKCZ, PARD3, TIAM1 and RAP1B to the cell junction. Associates with CTNND1/p120-catenin to control CADH5 endocytosis. The chain is Cadherin-5 from Bos taurus (Bovine).